The sequence spans 321 residues: p-hydroxybenzoic acid efflux pump subunit AaeA (321 aa).

The helical transmembrane segment at 22-42 (VVITLVIVLCAIVAIFRVWAF) threads the bilayer.

The protein belongs to the membrane fusion protein (MFP) (TC 8.A.1) family.

Its subcellular location is the cell inner membrane. In terms of biological role, forms an efflux pump with AaeB. This is p-hydroxybenzoic acid efflux pump subunit AaeA from Pectobacterium atrosepticum (strain SCRI 1043 / ATCC BAA-672) (Erwinia carotovora subsp. atroseptica).